The chain runs to 292 residues: Ribosomal protein L11 methyltransferase (292 aa).

S-adenosyl-L-methionine is bound by residues T144, G165, D187, and N229.

This sequence belongs to the methyltransferase superfamily. PrmA family.

It is found in the cytoplasm. It carries out the reaction L-lysyl-[protein] + 3 S-adenosyl-L-methionine = N(6),N(6),N(6)-trimethyl-L-lysyl-[protein] + 3 S-adenosyl-L-homocysteine + 3 H(+). Methylates ribosomal protein L11. This Saccharophagus degradans (strain 2-40 / ATCC 43961 / DSM 17024) protein is Ribosomal protein L11 methyltransferase.